Here is a 414-residue protein sequence, read N- to C-terminus: NADH-dependent flavin oxidoreductase iccE (414 aa).

Residues threonine 25–alanine 28 and glutamine 107 each bind FMN. Histidine 188–histidine 191 serves as a coordination point for substrate. Alanine 347–arginine 348 provides a ligand contact to FMN.

Belongs to the NADH:flavin oxidoreductase/NADH oxidase family.

It carries out the reaction 8-epi-ilicicolin H = ilicicolin H. The protein operates within mycotoxin biosynthesis. Functionally, NADH-dependent flavin oxidoreductase; part of the gene cluster that mediates the biosynthesis of ilicicolin H, a 4-hydroxy-2-pyridonealkaloid that has potent and broad antifungal activities by inhibiting the mitochondrial respiration chain. IccE acts as an epimerase and catalyzes the conversion of 8-epi-ilicicolin H into the final product ilicicolin H. The biosynthesis of ilicicolin H starts with formation of the tetramic acid by the hybrid PKS-NRPS synthetase iccA with the partnering trans-enoyl reductase iccB since iccA lacks a designated enoylreductase (ER) domain. The cytochrome P450 monooxygenase iccC then catalyzes the ring expansion of the tetramate to the acyclic 2-pyridone. The pericyclase iccD further converts the acyclic 2-pyridone into 8-epi-ilicicolin H. Finally, the epimerase iccE converts 8-epi-ilicicolin H into ilicicolin H via epimerization. IccA to iccE are sufficient for ilicicolin H biosynthesis and the roles of the remaining enzymes, iccF, iccG and iccH within the pathway have still to be determined. The sequence is that of NADH-dependent flavin oxidoreductase iccE from Talaromyces variabilis (Penicillium variabile).